The chain runs to 549 residues: Efflux pump patC (549 aa).

The segment covering 1–12 has biased composition (polar residues); sequence MAESTAHTSPSL. The tract at residues 1–40 is disordered; sequence MAESTAHTSPSLNDKEREVDQGILSDESGPAEEVKETPDQ. 14 consecutive transmembrane segments (helical) span residues 50–70, 85–105, 116–136, 146–166, 178–198, 206–226, 252–272, 282–302, 321–341, 360–380, 385–405, 419–439, 460–482, and 526–546; these read LLICIAVFSANLLYGLDNTIV, AQLGWLGVGFTLGSVVFILPL, WLFIGCLTMFAAGSALCGGAP, VWAGAGGAGMYLGNLNLITIL, LVGLIYGVGCILGPIIGGAFA, WGFYINLIIFGIMAPIYVFLL, VLSAGMHVSFILFIVFGGVMW, LYVVAAVTLIAFALSQYFCVL, IALYVLMACGGAALFVAVYYI, LLPFICFYVATILLCGWLMPK, VLWYLLSGIFMVIGSATMYTV, ILLGLGMATTQAAYAVGPSLV, LLGLAIASAIFQSETLSGLNALL, and VYVMAIAAGALYVIASCFLPW.

This sequence belongs to the major facilitator superfamily. TCR/Tet family.

The protein localises to the vacuole membrane. The protein resides in the cell membrane. Efflux pump; part of the gene cluster that mediates the biosynthesis of patulin, an acetate-derived tetraketide mycotoxin produced by several fungal species that shows antimicrobial properties against several bacteria. May be involved in the secretion of E-ascladiol to be converted to patulin by the secreted patulin synthase patE. In Aspergillus clavatus (strain ATCC 1007 / CBS 513.65 / DSM 816 / NCTC 3887 / NRRL 1 / QM 1276 / 107), this protein is Efflux pump patC.